The following is a 69-amino-acid chain: Large ribosomal subunit protein uL30 (69 aa).

Belongs to the universal ribosomal protein uL30 family. As to quaternary structure, part of the 50S ribosomal subunit.

This chain is Large ribosomal subunit protein uL30, found in Rhizobium etli (strain ATCC 51251 / DSM 11541 / JCM 21823 / NBRC 15573 / CFN 42).